We begin with the raw amino-acid sequence, 388 residues long: Succinate--CoA ligase [ADP-forming] subunit beta (388 aa).

An ATP-grasp domain is found at 9 to 244; that stretch reads KQLFAEYGLP…PSQDDPREAH (236 aa). Residues Lys46, 53-55, Glu99, Thr102, and Glu107 contribute to the ATP site; that span reads GRG. Residues Asn199 and Asp213 each coordinate Mg(2+). Residues Asn264 and 321-323 each bind substrate; that span reads GIV.

The protein belongs to the succinate/malate CoA ligase beta subunit family. As to quaternary structure, heterotetramer of two alpha and two beta subunits. Mg(2+) is required as a cofactor.

It catalyses the reaction succinate + ATP + CoA = succinyl-CoA + ADP + phosphate. The catalysed reaction is GTP + succinate + CoA = succinyl-CoA + GDP + phosphate. It participates in carbohydrate metabolism; tricarboxylic acid cycle; succinate from succinyl-CoA (ligase route): step 1/1. In terms of biological role, succinyl-CoA synthetase functions in the citric acid cycle (TCA), coupling the hydrolysis of succinyl-CoA to the synthesis of either ATP or GTP and thus represents the only step of substrate-level phosphorylation in the TCA. The beta subunit provides nucleotide specificity of the enzyme and binds the substrate succinate, while the binding sites for coenzyme A and phosphate are found in the alpha subunit. The polypeptide is Succinate--CoA ligase [ADP-forming] subunit beta (Pseudomonas syringae pv. tomato (strain ATCC BAA-871 / DC3000)).